Here is a 240-residue protein sequence, read N- to C-terminus: ATP synthase subunit a 1 (240 aa).

Helical transmembrane passes span 23–43, 82–102, 120–140, 186–206, and 207–227; these read GQVL…SVLA, VPFI…GALF, DINT…YAGF, LVVA…VMLL, and GLFT…AYIH.

This sequence belongs to the ATPase A chain family. As to quaternary structure, F-type ATPases have 2 components, CF(1) - the catalytic core - and CF(0) - the membrane proton channel. CF(1) has five subunits: alpha(3), beta(3), gamma(1), delta(1), epsilon(1). CF(0) has four main subunits: a, b, b' and c.

It is found in the cellular thylakoid membrane. Functionally, key component of the proton channel; it plays a direct role in the translocation of protons across the membrane. The chain is ATP synthase subunit a 1 from Acaryochloris marina (strain MBIC 11017).